A 76-amino-acid chain; its full sequence is Dermaseptin-SP2 (76 aa).

Residues 1–22 (MAFLKKSLFLVLFLGLVSLSIC) form the signal peptide. A propeptide spanning residues 23-45 (EEEKRENEDEEEQEDEEQSEEKR) is cleaved from the precursor. The tract at residues 24-44 (EEKRENEDEEEQEDEEQSEEK) is disordered. The span at 30 to 41 (EDEEEQEDEEQS) shows a compositional bias: acidic residues. The residue at position 73 (Gln73) is a Glutamine amide. A propeptide spanning residues 74–76 (GEQ) is cleaved from the precursor.

As to expression, expressed by the skin glands.

Its subcellular location is the secreted. The protein localises to the target cell membrane. Functionally, antimicrobial peptide with activity against Gram-positive and Gram-negative bacteria and fungi. Has been tested against E.coli (MIC=2.68-8 uM), S.aureus (ATCC 25923, MIC=2.68-8 uM), S.aureus (ATCC oxacillin resistant, MIC=2.68 uM), K.pneumoniae (MIC=10.71 uM) and C.albicans (MIC=10.71-32 uM). Probably acts by disturbing membrane functions with its alpha-helical amphipathic structure. May penetrate bacterial membranes, but stay at the mammalian membrane surface. Shows a very weak hemolytic activity. This Agalychnis spurrelli (Gliding leaf frog) protein is Dermaseptin-SP2.